We begin with the raw amino-acid sequence, 105 residues long: MKPTLCFLFILVSLFPLIVPGNAQCSFESLVDQRIKEALSRQEPKTISCTSVTSSGRLASCPAGMVVTGCACGYGCGSWDIRNGNTCHCQCSVMDWASARCCRMA.

Positions 1 to 23 (MKPTLCFLFILVSLFPLIVPGNA) are cleaved as a signal peptide. 5 cysteine pairs are disulfide-bonded: cysteine 49/cysteine 102, cysteine 61/cysteine 101, cysteine 70/cysteine 87, cysteine 72/cysteine 89, and cysteine 76/cysteine 91.

It belongs to the resistin/FIZZ family. Homodimer; disulfide-linked. Heterodimer with RETNLG. Strongly expressed in colon, and at lower levels in ileum. In colon, found throughout the crypt and surface epithelium and in goblet cells (at protein level). Specific to the gastrointestinal tract; not detected in other tissues tested.

The protein resides in the secreted. Probable hormone. The polypeptide is Resistin-like beta (Retnlb) (Mus musculus (Mouse)).